The primary structure comprises 531 residues: HERV-H LTR-associating protein 1 (531 aa).

The N-terminal stretch at 1–29 (MLGFLSRGPSMKLCMGLACVLSLWNTVSG) is a signal peptide. Residues asparagine 79, asparagine 143, and asparagine 161 are each glycosylated (N-linked (GlcNAc...) asparagine). Disordered stretches follow at residues 231 to 289 (GTAR…RPPE) and 340 to 362 (EKKP…GTEE). 2 stretches are compositionally biased toward polar residues: residues 232–269 (TART…SSPW) and 349–362 (ETRS…GTEE).

It localises to the secreted. In Homo sapiens (Human), this protein is HERV-H LTR-associating protein 1 (HHLA1).